Here is a 204-residue protein sequence, read N- to C-terminus: Cytochrome b6 (204 aa).

The helical transmembrane segment at 23–43 (YCLGGITLTSFLVQVATGSAM) threads the bilayer. Cys-24 serves as a coordination point for heme c. 2 residues coordinate heme b: His-75 and His-89. Helical transmembrane passes span 81–101 (MMVLMMILHVFRVYLTGGFKK), 107–127 (WVTGVILGVLTVSFGVTGYSL), and 136–157 (AVKIVTGVPEAIPVIGSPLVEL). Positions 176 and 191 each coordinate heme b. The chain crosses the membrane as a helical span at residues 177-197 (TFILPLLTAVFMPMHFLMIRK).

Belongs to the cytochrome b family. PetB subfamily. The 4 large subunits of the cytochrome b6-f complex are cytochrome b6, subunit IV (17 kDa polypeptide, PetD), cytochrome f and the Rieske protein, while the 4 small subunits are PetG, PetL, PetM and PetN. The complex functions as a dimer. The cofactor is heme b. Heme c serves as cofactor.

Its subcellular location is the plastid. The protein resides in the chloroplast thylakoid membrane. Functionally, component of the cytochrome b6-f complex, which mediates electron transfer between photosystem II (PSII) and photosystem I (PSI), cyclic electron flow around PSI, and state transitions. The chain is Cytochrome b6 from Picea abies (Norway spruce).